The primary structure comprises 217 residues: Peptide methionine sulfoxide reductase MsrA (217 aa).

Residue Cys-56 is part of the active site.

Belongs to the MsrA Met sulfoxide reductase family.

The catalysed reaction is L-methionyl-[protein] + [thioredoxin]-disulfide + H2O = L-methionyl-(S)-S-oxide-[protein] + [thioredoxin]-dithiol. The enzyme catalyses [thioredoxin]-disulfide + L-methionine + H2O = L-methionine (S)-S-oxide + [thioredoxin]-dithiol. Its function is as follows. Has an important function as a repair enzyme for proteins that have been inactivated by oxidation. Catalyzes the reversible oxidation-reduction of methionine sulfoxide in proteins to methionine. This chain is Peptide methionine sulfoxide reductase MsrA, found in Rippkaea orientalis (strain PCC 8801 / RF-1) (Cyanothece sp. (strain PCC 8801)).